The sequence spans 39 residues: Cytochrome b559 subunit beta (39 aa).

A helical membrane pass occupies residues Trp-14–Ser-30. His-18 contacts heme.

It belongs to the PsbE/PsbF family. As to quaternary structure, heterodimer of an alpha subunit and a beta subunit. PSII is composed of 1 copy each of membrane proteins PsbA, PsbB, PsbC, PsbD, PsbE, PsbF, PsbH, PsbI, PsbJ, PsbK, PsbL, PsbM, PsbT, PsbX, PsbY, PsbZ, Psb30/Ycf12, at least 3 peripheral proteins of the oxygen-evolving complex and a large number of cofactors. It forms dimeric complexes. Heme b is required as a cofactor.

It localises to the plastid. Its subcellular location is the chloroplast thylakoid membrane. Its function is as follows. This b-type cytochrome is tightly associated with the reaction center of photosystem II (PSII). PSII is a light-driven water:plastoquinone oxidoreductase that uses light energy to abstract electrons from H(2)O, generating O(2) and a proton gradient subsequently used for ATP formation. It consists of a core antenna complex that captures photons, and an electron transfer chain that converts photonic excitation into a charge separation. The chain is Cytochrome b559 subunit beta from Psilotum nudum (Whisk fern).